A 126-amino-acid polypeptide reads, in one-letter code: Ribonuclease VapC23 (126 aa).

A PINc domain is found at 2–118; sequence IFVDTNVFMY…GVTRIKTFDH (117 aa). The Mg(2+) site is built by Asp5 and Asp98.

Belongs to the PINc/VapC protein family. Requires Mg(2+) as cofactor.

Toxic component of a type II toxin-antitoxin (TA) system. An RNase. The cognate antitoxin is VapB23. In Mycobacterium tuberculosis (strain CDC 1551 / Oshkosh), this protein is Ribonuclease VapC23.